The primary structure comprises 219 residues: Bacterial microcompartment shell protein EutL (219 aa).

BMC circularly permuted domains follow at residues Met1–Phe113 and Gln114–Pro215. Ethanolamine is bound by residues Asp45, Asp46, Glu83, and Phe113. The tract at residues Asp45 to Asp46 is part of the acidic patch lining the small pore. Glu157 serves as a coordination point for Zn(2+). Residue Thr183–Tyr185 participates in ethanolamine binding.

The protein belongs to the EutL/PduB family. As to quaternary structure, homotrimerizes to form a pseudohexamer. The trimers form a two-dimensional array about 37 Angstroms thick.

It localises to the bacterial microcompartment. It functions in the pathway amine and polyamine degradation; ethanolamine degradation. A component of the bacterial microcompartment (BMC) shell dedicated to ethanolamine degradation. Two crystal forms have been seen; a form with a closed central pore that has 3 very small (1.1-2.2 Angstroms) channels per trimer lined by acidic and aromatic residues. A form with a large central pore (8-12 Angstroms) has also been seen; this is probably a functional pore which allows molecules to enter and exit the BMC in a selective, gated manner. Another group only sees the central pore in the presence of Zn(2+); soaking crystals in ZnCl(2) leads to dramatic conformational changes that open a central pore of about 12 Angstroms. Whether Zn(2+) binding is physiologically relevant is unclear, however it suggests a gating mechanism exists. Ethanolamine-binding by the small channels has been hypothesized to stabilize the EutL central pore in a closed (non-transporting) state. An open pore is thought to be large enough to transport ATP and/or cobalamin. In Escherichia coli (strain K12), this protein is Bacterial microcompartment shell protein EutL (eutL).